The sequence spans 741 residues: ABC transporter D family member 2 (741 aa).

3 helical membrane passes run 39 to 59 (GSLG…FSLV), 119 to 139 (FLSL…SVSI), and 260 to 280 (VVVM…VSGF). The ABC transmembrane type-1 domain occupies 131 to 409 (ARTMLSVSIA…LMVALSQAIG (279 aa)). In terms of domain architecture, ABC transporter spans 518 to 740 (IKFENVSIVS…DDDHLKKPLS (223 aa)). 551–558 (GPNGSGKS) contacts ATP.

Belongs to the ABC transporter superfamily. ABCD family. Peroxisomal fatty acyl CoA transporter (TC 3.A.1.203) subfamily.

It localises to the membrane. This Dictyostelium discoideum (Social amoeba) protein is ABC transporter D family member 2 (abcD2).